The primary structure comprises 325 residues: Zinc finger C2HC domain-containing protein 1A (325 aa).

A C2HC/C3H-type 1 zinc finger spans residues 15-44 (ELLPCKICGRTFFPVALKKHGPICQKTATK). Zn(2+) contacts are provided by Cys-19, Cys-22, His-34, and Cys-38. Positions 43–83 (TKKRKTFDSSRQRAEGTDIPTVKPLKPRPEPPKKPSNWRRK) are disordered. The segment covering 48-58 (TFDSSRQRAEG) has biased composition (basic and acidic residues). The C2HC/C3H-type 2 zinc-finger motif lies at 118–147 (DYIQCPYCQRRFNENAADRHINFCKEQAAR). Positions 122, 125, 137, and 141 each coordinate Zn(2+). The disordered stretch occupies residues 150-260 (NKGKFSTDTK…NPAPGVLTNK (111 aa)). Low complexity-rich tracts occupy residues 177 to 188 (SNSPGTASSGSS) and 197 to 216 (GKTVVGVPSGKVSSSSSSLG). The residue at position 223 (Ser-223) is a Phosphoserine. Thr-244 is modified (phosphothreonine). Ser-292 is modified (phosphoserine).

This sequence belongs to the ZC2HC1 family. Requires Zn(2+) as cofactor.

This is Zinc finger C2HC domain-containing protein 1A (ZC2HC1A) from Homo sapiens (Human).